The chain runs to 276 residues: NAD(+)--protein-threonine ADP-ribosyltransferase (276 aa).

Interacts directly with host ubiquitin.

It localises to the secreted. The protein resides in the host cell. The enzyme catalyses L-threonyl-[protein] + NAD(+) = O-(ADP-D-ribosyl)-L-threonyl-[protein] + nicotinamide + H(+). In terms of biological role, ADP-ribosyltransferase that specifically modifies host ubiquitin on 'Thr-66' residue, which causes the shutdown of polyubiquitin synthesis and disrupts the recognition and reversal of polyubiquitin in host cells during infection. Threonine ADP-ribosylation of ubiquitin prevents the transfer of ubiquitin from ubiquitin-activating enzyme E1 to ubiquitin-conjugating enzyme E2, which inhibits subsequent ubiquitin activation and leads to the shutdown of polyubiquitin synthesis in host cells. The modification also causes dysfunction of polyubiquitin chains in cells, thereby blocking host ubiquitin signaling. ADP-ribosylation by CteC is likely irreversible. Plays a crucial role in bacterial colonization in mice during infection. This Chromobacterium violaceum (strain ATCC 12472 / DSM 30191 / JCM 1249 / CCUG 213 / NBRC 12614 / NCIMB 9131 / NCTC 9757 / MK) protein is NAD(+)--protein-threonine ADP-ribosyltransferase.